Here is a 211-residue protein sequence, read N- to C-terminus: Imidazole glycerol phosphate synthase subunit HisH (211 aa).

The region spanning 3–211 (VVAVIDYEMG…VSQVREKIAA (209 aa)) is the Glutamine amidotransferase type-1 domain. Cysteine 81 functions as the Nucleophile in the catalytic mechanism. Active-site residues include histidine 186 and glutamate 188.

As to quaternary structure, heterodimer of HisH and HisF.

The protein localises to the cytoplasm. It catalyses the reaction 5-[(5-phospho-1-deoxy-D-ribulos-1-ylimino)methylamino]-1-(5-phospho-beta-D-ribosyl)imidazole-4-carboxamide + L-glutamine = D-erythro-1-(imidazol-4-yl)glycerol 3-phosphate + 5-amino-1-(5-phospho-beta-D-ribosyl)imidazole-4-carboxamide + L-glutamate + H(+). The enzyme catalyses L-glutamine + H2O = L-glutamate + NH4(+). The protein operates within amino-acid biosynthesis; L-histidine biosynthesis; L-histidine from 5-phospho-alpha-D-ribose 1-diphosphate: step 5/9. IGPS catalyzes the conversion of PRFAR and glutamine to IGP, AICAR and glutamate. The HisH subunit catalyzes the hydrolysis of glutamine to glutamate and ammonia as part of the synthesis of IGP and AICAR. The resulting ammonia molecule is channeled to the active site of HisF. This chain is Imidazole glycerol phosphate synthase subunit HisH, found in Trichormus variabilis (strain ATCC 29413 / PCC 7937) (Anabaena variabilis).